Here is a 180-residue protein sequence, read N- to C-terminus: ATP-dependent protease subunit HslV (180 aa).

Threonine 8 is a catalytic residue. Na(+) contacts are provided by serine 165, cysteine 168, and threonine 171.

It belongs to the peptidase T1B family. HslV subfamily. In terms of assembly, a double ring-shaped homohexamer of HslV is capped on each side by a ring-shaped HslU homohexamer. The assembly of the HslU/HslV complex is dependent on binding of ATP.

The protein localises to the cytoplasm. It carries out the reaction ATP-dependent cleavage of peptide bonds with broad specificity.. With respect to regulation, allosterically activated by HslU binding. Protease subunit of a proteasome-like degradation complex believed to be a general protein degrading machinery. This chain is ATP-dependent protease subunit HslV, found in Staphylococcus saprophyticus subsp. saprophyticus (strain ATCC 15305 / DSM 20229 / NCIMB 8711 / NCTC 7292 / S-41).